A 302-amino-acid chain; its full sequence is Orotidine 5'-phosphate decarboxylase (302 aa).

The Proton donor role is filled by Lys105.

This sequence belongs to the OMP decarboxylase family. Type 2 subfamily.

The catalysed reaction is orotidine 5'-phosphate + H(+) = UMP + CO2. The protein operates within pyrimidine metabolism; UMP biosynthesis via de novo pathway; UMP from orotate: step 2/2. This Rhodopirellula baltica (strain DSM 10527 / NCIMB 13988 / SH1) protein is Orotidine 5'-phosphate decarboxylase.